The chain runs to 225 residues: N-(5'-phosphoribosyl)anthranilate isomerase (225 aa).

The protein belongs to the TrpF family.

It carries out the reaction N-(5-phospho-beta-D-ribosyl)anthranilate = 1-(2-carboxyphenylamino)-1-deoxy-D-ribulose 5-phosphate. Its pathway is amino-acid biosynthesis; L-tryptophan biosynthesis; L-tryptophan from chorismate: step 3/5. The protein is N-(5'-phosphoribosyl)anthranilate isomerase of Nitrobacter hamburgensis (strain DSM 10229 / NCIMB 13809 / X14).